The chain runs to 574 residues: Septation ring formation regulator EzrA (574 aa).

The Extracellular segment spans residues 1–7 (MSSGLIL). A helical transmembrane segment spans residues 8–26 (LIVAIVLLVIIAYLVGVII). The Cytoplasmic segment spans residues 27–574 (RKRNDTLITS…YEKTRERIRF (548 aa)). Coiled coils occupy residues 102 to 131 (NFIR…REAL), 161 to 190 (ENED…FVAL), 276 to 379 (VTLD…QQEK), and 459 to 493 (QLEA…NLEE).

This sequence belongs to the EzrA family.

The protein resides in the cell membrane. Negative regulator of FtsZ ring formation; modulates the frequency and position of FtsZ ring formation. Inhibits FtsZ ring formation at polar sites. Interacts either with FtsZ or with one of its binding partners to promote depolymerization. The polypeptide is Septation ring formation regulator EzrA (Streptococcus equi subsp. zooepidemicus (strain MGCS10565)).